The following is a 245-amino-acid chain: 1-(5-phosphoribosyl)-5-[(5-phosphoribosylamino)methylideneamino] imidazole-4-carboxamide isomerase (245 aa).

Asp-8 serves as the catalytic Proton acceptor. The Proton donor role is filled by Asp-130.

Belongs to the HisA/HisF family.

It localises to the cytoplasm. It catalyses the reaction 1-(5-phospho-beta-D-ribosyl)-5-[(5-phospho-beta-D-ribosylamino)methylideneamino]imidazole-4-carboxamide = 5-[(5-phospho-1-deoxy-D-ribulos-1-ylimino)methylamino]-1-(5-phospho-beta-D-ribosyl)imidazole-4-carboxamide. Its pathway is amino-acid biosynthesis; L-histidine biosynthesis; L-histidine from 5-phospho-alpha-D-ribose 1-diphosphate: step 4/9. The protein is 1-(5-phosphoribosyl)-5-[(5-phosphoribosylamino)methylideneamino] imidazole-4-carboxamide isomerase of Pseudomonas putida (strain ATCC 700007 / DSM 6899 / JCM 31910 / BCRC 17059 / LMG 24140 / F1).